A 294-amino-acid polypeptide reads, in one-letter code: tRNA dimethylallyltransferase (294 aa).

Residue 11–18 (GPTAVGKT) coordinates ATP. 13–18 (TAVGKT) contacts substrate. An interaction with substrate tRNA region spans residues 36-39 (DSQQ).

It belongs to the IPP transferase family. As to quaternary structure, monomer. Mg(2+) serves as cofactor.

The catalysed reaction is adenosine(37) in tRNA + dimethylallyl diphosphate = N(6)-dimethylallyladenosine(37) in tRNA + diphosphate. In terms of biological role, catalyzes the transfer of a dimethylallyl group onto the adenine at position 37 in tRNAs that read codons beginning with uridine, leading to the formation of N6-(dimethylallyl)adenosine (i(6)A). In Lactococcus lactis subsp. lactis (strain IL1403) (Streptococcus lactis), this protein is tRNA dimethylallyltransferase.